The following is a 2624-amino-acid chain: Highly reducing polyketide synthase ALT1 (2624 aa).

The Ketosynthase family 3 (KS3) domain maps to 28 to 449; it reads VLPLAIVGMG…GSNAHCILES (422 aa). Catalysis depends on Cys200, which acts as the For beta-ketoacyl synthase activity. The tract at residues 289–308 is disordered; that stretch reads VRGTSSNSDGKTPGMSMPSS. Residues His335 and His372 each act as for beta-ketoacyl synthase activity in the active site. The span at 523 to 544 shows a compositional bias: polar residues; that stretch reads ESYSNHHTLTETTNPSNNTATN. The tract at residues 523–545 is disordered; sequence ESYSNHHTLTETTNPSNNTATNG. The tract at residues 639 to 945 is malonyl-CoA:ACP transacylase (MAT) domain; that stretch reads VFTGQGAQWA…GYTPAMIRGK (307 aa). Residues 1009–1140 are N-terminal hotdog fold; it reads HELLGSQTLE…GQVRPGRDAH (132 aa). Residues 1009 to 1301 form a dehydratase (DH) domain region; that stretch reads HELLGSQTLE…LEGGKFSPIE (293 aa). In terms of domain architecture, PKS/mFAS DH spans 1009–1306; it reads HELLGSQTLE…FSPIEVDDGI (298 aa). His1041 functions as the Proton acceptor; for dehydratase activity in the catalytic mechanism. The C-terminal hotdog fold stretch occupies residues 1157 to 1306; that stretch reads QYPRPVDSLY…FSPIEVDDGI (150 aa). Asp1217 (proton donor; for dehydratase activity) is an active-site residue. Positions 1493–1599 are methyltransferase (CMet) domain; that stretch reads LEIGAGTGGA…RKLLAPEGYL (107 aa). The tract at residues 1895–2205 is enoyl reductase (ER) (ER) domain; sequence GLLQTLKWVD…KGTHLGKIVV (311 aa). The segment at 2230 to 2509 is ketoreductase (KR) domain; sequence TYVLVGGLGG…DSDALRFFIT (280 aa). Residues 2522 to 2600 enclose the Carrier domain; that stretch reads ASLDLVTRTI…GLAKLILDAL (79 aa). An O-(pantetheine 4'-phosphoryl)serine modification is found at Ser2559.

It functions in the pathway mycotoxin biosynthesis. Functionally, highly reducing polyketide synthase; part of the gene cluster that mediates the biosynthesis of the host-selective toxins (HSTs) AAL-toxins, sphinganine-analog mycotoxins responsible for Alternaria stem canker on tomato by the tomato pathotype. The biosynthesis starts with the polyketide synthase ALT1-catalyzed C-16 carbon chain assembly from one starter acetyl-CoA unit with malonyl-CoA extender units. ALT1 also selectively transfers methyl groups at the first and the third cycle of chain elongation for AAL toxin. The C-16 polyketide chain is released from the enzyme by a nucleophilic attack of a carbanion, which is derived from R-carbon of glycin by decarboxylation, on the carbonyl carbon of polyketide acyl chain. This step is probably catalyzed by a pyridoxal 5'-phosphate-dependent aminoacyl transferase ALT4. The respective functions of the other enzymes encoded by the cluster have still to be elucidated. The sphingosine N-acyltransferase-like protein ALT7 seems not to act as a resistance/self-tolerance factor against the toxin in the toxin biosynthetic gene cluster, contrary to what is expected. In Alternaria alternata (Alternaria rot fungus), this protein is Highly reducing polyketide synthase ALT1.